The chain runs to 834 residues: Periplasmic nitrate reductase (834 aa).

The tat-type signal signal peptide spans 1–31; the sequence is MSSELTRRNLLKAHAAGIAAATAGIALPAAA. One can recognise a 4Fe-4S Mo/W bis-MGD-type domain in the interval 43–99; sequence IKWSKAPCRFCGTGCGVMVGVKEGKVVATHGDMQAEVNRGLNCIKGYFLSKIMYGKD. The [4Fe-4S] cluster site is built by cysteine 50, cysteine 53, cysteine 57, and cysteine 85. Mo-bis(molybdopterin guanine dinucleotide) is bound by residues lysine 87, glutamine 154, asparagine 179, cysteine 183, 216–223, 247–251, 266–268, methionine 377, glutamine 381, asparagine 487, 513–514, lysine 536, aspartate 563, and 723–732; these read WGSNMAEM, STFTH, GTD, SD, and TGRVLEHWHS. Tryptophan 799 contacts substrate. Residues asparagine 807 and lysine 824 each contribute to the Mo-bis(molybdopterin guanine dinucleotide) site.

This sequence belongs to the prokaryotic molybdopterin-containing oxidoreductase family. NasA/NapA/NarB subfamily. As to quaternary structure, component of the periplasmic nitrate reductase NapAB complex composed of NapA and NapB. [4Fe-4S] cluster is required as a cofactor. It depends on Mo-bis(molybdopterin guanine dinucleotide) as a cofactor. Post-translationally, predicted to be exported by the Tat system. The position of the signal peptide cleavage has not been experimentally proven.

It localises to the periplasm. The catalysed reaction is 2 Fe(II)-[cytochrome] + nitrate + 2 H(+) = 2 Fe(III)-[cytochrome] + nitrite + H2O. In terms of biological role, catalytic subunit of the periplasmic nitrate reductase complex NapAB. Receives electrons from NapB and catalyzes the reduction of nitrate to nitrite. This is Periplasmic nitrate reductase from Agrobacterium fabrum (strain C58 / ATCC 33970) (Agrobacterium tumefaciens (strain C58)).